Here is a 747-residue protein sequence, read N- to C-terminus: Asparagine synthetase [glutamine-hydrolyzing] 2 (747 aa).

The active-site For GATase activity is the C2. One can recognise a Glutamine amidotransferase type-2 domain in the interval 2–218; sequence CGLAGIINLA…AGHYLEINLT (217 aa). L-glutamine is bound by residues 52–56, 77–79, and D100; these read RLSIL and NGE. 395-396 provides a ligand contact to ATP; that stretch reads SP.

The protein belongs to the asparagine synthetase family.

The enzyme catalyses L-aspartate + L-glutamine + ATP + H2O = L-asparagine + L-glutamate + AMP + diphosphate + H(+). The protein operates within amino-acid biosynthesis; L-asparagine biosynthesis; L-asparagine from L-aspartate (L-Gln route): step 1/1. The protein is Asparagine synthetase [glutamine-hydrolyzing] 2 (asnH) of Bacillus subtilis (strain 168).